Here is a 94-residue protein sequence, read N- to C-terminus: UPF0298 protein SEQ_1830 (94 aa).

It belongs to the UPF0298 family.

It localises to the cytoplasm. In Streptococcus equi subsp. equi (strain 4047), this protein is UPF0298 protein SEQ_1830.